The following is a 492-amino-acid chain: G protein-activated inward rectifier potassium channel 1 (492 aa).

The Cytoplasmic segment spans residues Met-1 to Trp-72. The segment at Ser-16 to Arg-35 is disordered. The chain crosses the membrane as a helical span at residues Arg-73–Ile-97. The Extracellular portion of the chain corresponds to Ala-98 to Asn-121. Positions Phe-122–Glu-133 form an intramembrane region, helical; Pore-forming. The segment at residues Ala-134 to Tyr-140 is an intramembrane region (pore-forming). The Selectivity filter motif lies at Thr-135 to Tyr-140. Topologically, residues Arg-141–Glu-149 are extracellular. A helical membrane pass occupies residues Gly-150–Cys-171. Residues Met-172 to Thr-492 are Cytoplasmic-facing. The interval Ile-174–Leu-201 is polyphosphoinositide (PIP2)-binding. The disordered stretch occupies residues Ser-452–Thr-492.

The protein belongs to the inward rectifier-type potassium channel (TC 1.A.2.1) family. KCNJ3 subfamily. As to quaternary structure, associates with KCNJ5/GIRK4 or KCNJ6/GIRK2 or KCNJ9/GIRK3 to form a G-protein activated heteromultimer pore-forming unit. The resulting inward current is much larger.

The protein resides in the membrane. The catalysed reaction is K(+)(in) = K(+)(out). With respect to regulation, heteromultimer composed of KCNJ3/GIRK1 and KCNJ5/GIRK4 is activated by phosphatidylinositol 4,5 biphosphate (PtdIns(4,5)P2). Inward rectifier potassium channels are characterized by a greater tendency to allow potassium to flow into the cell rather than out of it. Their voltage dependence is regulated by the concentration of extracellular potassium; as external potassium is raised, the voltage range of the channel opening shifts to more positive voltages. The inward rectification is mainly due to the blockage of outward current by internal magnesium. This potassium channel is controlled by G proteins. This receptor plays a crucial role in regulating the heartbeat. This is G protein-activated inward rectifier potassium channel 1 (KCNJ3) from Gallus gallus (Chicken).